The sequence spans 248 residues: Chromatin target of PRMT1 protein (248 aa).

Ala-2 is modified (N-acetylalanine). Ser-40, Ser-49, and Ser-64 each carry phosphoserine. Lys-70 is covalently cross-linked (Glycyl lysine isopeptide (Lys-Gly) (interchain with G-Cter in SUMO2)). The disordered stretch occupies residues 151-204 (LRRGGVRGRGGPGRGGLGRGAMGRGGIGGRGRGMIGRGRGGFGGRGRGRGRGRG). Residues 153–206 (RGGVRGRGGPGRGGLGRGAMGRGGIGGRGRGMIGRGRGGFGGRGRGRGRGRGAL) form an interaction with PRMT1 region. A compositionally biased stretch (gly residues) spans 157-195 (RGRGGPGRGGLGRGAMGRGGIGGRGRGMIGRGRGGFGGR). The short motif at 194–203 (GRGRGRGRGR) is the GAR motif; involved in 5hmC binding element. Thr-242 is subject to Phosphothreonine.

In terms of assembly, interacts with PRMT1 and PRMT5. Interacts with the 5FMC complex; the interaction is methylation-dependent. Interacts with FYTTD1, SET and PRC1 complex members CBX4, RNF2 and PHC2; the interactions are methylation-independent. Interacts with ZNF148. Interacts with WDR77 and ER. In terms of processing, asymmetrically methylated by PRMT1. Symmetrically methylated by PRMT5.

The protein localises to the nucleus. It is found in the nucleolus. Its subcellular location is the nucleoplasm. It localises to the nucleus speckle. Its function is as follows. Plays an important role in the ligand-dependent activation of estrogen receptor target genes. May play a role in the silencing of fetal globin genes. Recruits the 5FMC complex to ZNF148, leading to desumoylation of ZNF148 and subsequent transactivation of ZNF148 target genes. Required for the tumorigenicity of glioblastoma cells. Binds to 5-hydroxymethylcytosine (5hmC) and associates with the methylosome complex containing PRMT1, PRMT5, MEP50 and ERH. The CHTOP-methylosome complex associated with 5hmC methylates H4R3 and transactivates genes involved in glioblastomagenesis. The chain is Chromatin target of PRMT1 protein (CHTOP) from Bos taurus (Bovine).